The following is a 1280-amino-acid chain: SET and MYND domain-containing protein DDB_G0284059 (1280 aa).

Disordered stretches follow at residues 1–35 (MTKKIKLSNSESNKVNNNNNNNHGNGHNHNHSHNH) and 111–167 (INKI…QKQQ). 2 stretches are compositionally biased toward low complexity: residues 16 to 25 (NNNNNNNHGN) and 117 to 153 (ENSPPSSPTLSSSTNTTTDRQELPQQQQQPQQQQSQP). TPR repeat units lie at residues 272–305 (SKGYKNKGNELFQKKQYSDALLLYNESLRIYDME) and 383–416 (HKLYYRRGICYYHLRKHYKAKKDFLRAHTLIEKR). Residues 439 to 468 (QKDEEIEQELDNKNNNSNDDEKQQQQQQQQ) adopt a coiled-coil conformation. Zn(2+) is bound by residues C533, C536, C546, C549, C555, C559, H568, and C572. The MYND-type zinc finger occupies 533–572 (CYNCFKEILSPIYCKECSNSQYCSNKCLNEDYVKQHGREC). Disordered stretches follow at residues 601-642 (ANKG…QNLN), 659-726 (ALSS…TTTT), 854-905 (QQQQ…PFSP), and 1039-1079 (AKLQ…LNNN). Composition is skewed to low complexity over residues 659–697 (ALSSASTPTTATATTTTTTTTATTPTTLAETLSSTSLTE), 712–726 (SSSSSSSSSSSTTTT), 854–898 (QQQQ…QNPP), 1042–1053 (QQQQQQQQQHQQ), and 1061–1079 (NSNPTNLGSNNNNNYLNNN). An SET domain is found at 822–965 (CQLTTYTFAI…KGEEILGCYG (144 aa)). Residues 1218 to 1251 (GREYSKLGQIYLTLGEIEKSEDAIEKAESILMSW) form a TPR 3 repeat.

It belongs to the class V-like SAM-binding methyltransferase superfamily.

Its function is as follows. Probable methyltransferase. The protein is SET and MYND domain-containing protein DDB_G0284059 of Dictyostelium discoideum (Social amoeba).